The primary structure comprises 252 residues: Enolase-phosphatase E1 (252 aa).

Mg(2+) contacts are provided by Asp-14 and Glu-16. Substrate contacts are provided by residues 143–144 and Lys-177; that span reads SS. Asp-202 lines the Mg(2+) pocket.

This sequence belongs to the HAD-like hydrolase superfamily. MasA/MtnC family. Monomer. Mg(2+) is required as a cofactor.

The protein resides in the cytoplasm. It is found in the nucleus. It catalyses the reaction 5-methylsulfanyl-2,3-dioxopentyl phosphate + H2O = 1,2-dihydroxy-5-(methylsulfanyl)pent-1-en-3-one + phosphate. It functions in the pathway amino-acid biosynthesis; L-methionine biosynthesis via salvage pathway; L-methionine from S-methyl-5-thio-alpha-D-ribose 1-phosphate: step 3/6. Its pathway is amino-acid biosynthesis; L-methionine biosynthesis via salvage pathway; L-methionine from S-methyl-5-thio-alpha-D-ribose 1-phosphate: step 4/6. Its function is as follows. Bifunctional enzyme that catalyzes the enolization of 2,3-diketo-5-methylthiopentyl-1-phosphate (DK-MTP-1-P) into the intermediate 2-hydroxy-3-keto-5-methylthiopentenyl-1-phosphate (HK-MTPenyl-1-P), which is then dephosphorylated to form the acireductone 1,2-dihydroxy-3-keto-5-methylthiopentene (DHK-MTPene). The sequence is that of Enolase-phosphatase E1 from Drosophila persimilis (Fruit fly).